A 391-amino-acid polypeptide reads, in one-letter code: Formate-dependent phosphoribosylglycinamide formyltransferase (391 aa).

N(1)-(5-phospho-beta-D-ribosyl)glycinamide contacts are provided by residues 20-21 and E80; that span reads EL. ATP contacts are provided by residues R112, K153, 158-163, 193-196, and E201; these read SSGKGQ and EGFI. Positions 117–306 constitute an ATP-grasp domain; it reads RLAAETLGLP…EFALHVRAIL (190 aa). E265 and E277 together coordinate Mg(2+). Residues D284, K354, and 361–362 each bind N(1)-(5-phospho-beta-D-ribosyl)glycinamide; that span reads RR.

The protein belongs to the PurK/PurT family. In terms of assembly, homodimer.

It carries out the reaction N(1)-(5-phospho-beta-D-ribosyl)glycinamide + formate + ATP = N(2)-formyl-N(1)-(5-phospho-beta-D-ribosyl)glycinamide + ADP + phosphate + H(+). It functions in the pathway purine metabolism; IMP biosynthesis via de novo pathway; N(2)-formyl-N(1)-(5-phospho-D-ribosyl)glycinamide from N(1)-(5-phospho-D-ribosyl)glycinamide (formate route): step 1/1. Its function is as follows. Involved in the de novo purine biosynthesis. Catalyzes the transfer of formate to 5-phospho-ribosyl-glycinamide (GAR), producing 5-phospho-ribosyl-N-formylglycinamide (FGAR). Formate is provided by PurU via hydrolysis of 10-formyl-tetrahydrofolate. The polypeptide is Formate-dependent phosphoribosylglycinamide formyltransferase (Shewanella sp. (strain MR-7)).